A 509-amino-acid polypeptide reads, in one-letter code: MQLNKYKNQNVAVFGLGKTGLSAINALTKSGARIYAWDDHEEQIANAKMMYKKCNFIHPKEYNWHEISALVLSPGVPTEPHWIVKLARRFDCKIKSDIELFLEAKTTNQKVIGVTGTNGKSTTTSLIGHILKSAGKKVAIGGNLGVPVLDLERDAEIYVIELSSFQLELMNEINVDISALLNITPDHIDRHGSMENYIATKLKLINGSEVAVIGCDNEITADIFNKFTGDKIPISVTYSPMSFQCVTLESRKEKPLPTTQMTEGGARDLISLAGNNLLDYSEQITGIDRNYLDPSVSYLDDKRGTGIQKISLKLENHSLSVSDVKINLISNAENIAATYAVCKVLGVDSNTIINGIKSFSGLRHRNELLGKIRNVFFVNDSKATNAKSSEKAILSYENINWIAGGRSKKGGIESLSKHFTRVRKAFLIGESTEAFANVMENKVDYVKCCNLEDAFRLAFEEALNSAEEVTILLSPACASFDQWKNFEERGEAFCRMFENLRYNHTCCLV.

116–122 (GTNGKST) lines the ATP pocket.

This sequence belongs to the MurCDEF family.

The protein resides in the cytoplasm. It carries out the reaction UDP-N-acetyl-alpha-D-muramoyl-L-alanine + D-glutamate + ATP = UDP-N-acetyl-alpha-D-muramoyl-L-alanyl-D-glutamate + ADP + phosphate + H(+). It functions in the pathway cell wall biogenesis; peptidoglycan biosynthesis. In terms of biological role, cell wall formation. Catalyzes the addition of glutamate to the nucleotide precursor UDP-N-acetylmuramoyl-L-alanine (UMA). This chain is UDP-N-acetylmuramoylalanine--D-glutamate ligase, found in Wolbachia pipientis wMel.